We begin with the raw amino-acid sequence, 320 residues long: Malate dehydrogenase (320 aa).

NAD(+) contacts are provided by residues 10–15 (GSGMIG) and Asp34. Substrate contacts are provided by Arg83 and Arg89. NAD(+) is bound by residues Asn96 and 119 to 121 (ITN). Substrate is bound by residues Asn121 and Arg152. His176 (proton acceptor) is an active-site residue.

Belongs to the LDH/MDH superfamily. MDH type 3 family.

It catalyses the reaction (S)-malate + NAD(+) = oxaloacetate + NADH + H(+). Its function is as follows. Catalyzes the reversible oxidation of malate to oxaloacetate. The polypeptide is Malate dehydrogenase (Rhizobium johnstonii (strain DSM 114642 / LMG 32736 / 3841) (Rhizobium leguminosarum bv. viciae)).